The primary structure comprises 322 residues: UPF0324 membrane protein BB4178 (322 aa).

Helical transmembrane passes span 13–35, 50–69, 76–98, 108–127, 139–161, 171–193, 209–231, 241–260, 273–292, and 296–318; these read FIRQ…YGNF, FTAR…NISI, GLPG…TVAG, TAML…VLAF, AVAV…VIYH, ALGI…ASNI, VALL…AAGA, VPWF…LDIL, VFVL…FAQI, and GPRV…YGIV.

Belongs to the UPF0324 family.

It localises to the cell membrane. In Bordetella bronchiseptica (strain ATCC BAA-588 / NCTC 13252 / RB50) (Alcaligenes bronchisepticus), this protein is UPF0324 membrane protein BB4178.